A 953-amino-acid polypeptide reads, in one-letter code: UvrABC system protein A (953 aa).

Gly-33–Ser-40 is a binding site for ATP. 2 consecutive ABC transporter domains span residues Trp-320 to Ile-599 and Gly-619 to Lys-949. Gly-652–Ser-659 contributes to the ATP binding site. The segment at Cys-752–Cys-778 adopts a C4-type zinc-finger fold.

This sequence belongs to the ABC transporter superfamily. UvrA family. In terms of assembly, forms a heterotetramer with UvrB during the search for lesions.

Its subcellular location is the cytoplasm. Functionally, the UvrABC repair system catalyzes the recognition and processing of DNA lesions. UvrA is an ATPase and a DNA-binding protein. A damage recognition complex composed of 2 UvrA and 2 UvrB subunits scans DNA for abnormalities. When the presence of a lesion has been verified by UvrB, the UvrA molecules dissociate. The sequence is that of UvrABC system protein A from Rickettsia typhi (strain ATCC VR-144 / Wilmington).